An 88-amino-acid polypeptide reads, in one-letter code: Small ribosomal subunit protein uS17 (88 aa).

The protein belongs to the universal ribosomal protein uS17 family. Part of the 30S ribosomal subunit.

In terms of biological role, one of the primary rRNA binding proteins, it binds specifically to the 5'-end of 16S ribosomal RNA. The polypeptide is Small ribosomal subunit protein uS17 (Ligilactobacillus salivarius (strain UCC118) (Lactobacillus salivarius)).